Consider the following 493-residue polypeptide: Dipeptide permease D (493 aa).

Helical transmembrane passes span 14–34 (VVAL…LLIL), 49–69 (ELFS…GYLA), 91–111 (LVLG…AIIV), 138–158 (GGFS…PIAC), 167–187 (WAMG…IFLC), 212–232 (NWGW…VLFW), 235–255 (WSVY…AKIY), 267–287 (LGLI…AQQG), 312–332 (MFQS…AWLV), 344–364 (IWGK…ILTL), 379–399 (LMVL…PVAM), 413–433 (VLTG…AGVI), and 458–478 (VFEQ…LIWL).

This sequence belongs to the major facilitator superfamily. Proton-dependent oligopeptide transporter (POT/PTR) (TC 2.A.17) family. DtpD subfamily.

The protein localises to the cell inner membrane. Functionally, probable proton-dependent permease that transports dipeptides. The sequence is that of Dipeptide permease D from Salmonella paratyphi C (strain RKS4594).